The chain runs to 113 residues: rRNA-processing protein cgrA (113 aa).

Positions 1-15 (MSTITTSSVASSNGM) are enriched in polar residues. The tract at residues 1 to 113 (MSTITTSSVA…REKRNKLLHS (113 aa)) is disordered. A coiled-coil region spans residues 37-100 (SYEKRLEARK…EKMHRKRVER (64 aa)). The segment covering 38–92 (YEKRLEARKLQEAVKEHEREMREEREAERKAQIQKIKDRRAAKEEKERYEKMAEK) has biased composition (basic and acidic residues). Basic residues predominate over residues 93–113 (MHRKRVERLKRREKRNKLLHS).

It belongs to the CGR1 family.

It is found in the nucleus. The protein localises to the nucleolus. Its function is as follows. Involved in nucleolar integrity and required for processing of the pre-rRNA for the 60S ribosome subunit. This chain is rRNA-processing protein cgrA (cgrA), found in Aspergillus clavatus (strain ATCC 1007 / CBS 513.65 / DSM 816 / NCTC 3887 / NRRL 1 / QM 1276 / 107).